We begin with the raw amino-acid sequence, 198 residues long: Ribose 1,5-bisphosphate phosphokinase PhnN (198 aa).

Residue 25–32 (GPSGAGKD) coordinates ATP.

This sequence belongs to the ribose 1,5-bisphosphokinase family.

It catalyses the reaction alpha-D-ribose 1,5-bisphosphate + ATP = 5-phospho-alpha-D-ribose 1-diphosphate + ADP. The protein operates within metabolic intermediate biosynthesis; 5-phospho-alpha-D-ribose 1-diphosphate biosynthesis; 5-phospho-alpha-D-ribose 1-diphosphate from D-ribose 5-phosphate (route II): step 3/3. Catalyzes the phosphorylation of ribose 1,5-bisphosphate to 5-phospho-D-ribosyl alpha-1-diphosphate (PRPP). In Bradyrhizobium diazoefficiens (strain JCM 10833 / BCRC 13528 / IAM 13628 / NBRC 14792 / USDA 110), this protein is Ribose 1,5-bisphosphate phosphokinase PhnN.